The sequence spans 544 residues: Glucose-6-phosphate isomerase (544 aa).

Glu-354 serves as the catalytic Proton donor. Residues His-385 and Lys-510 contribute to the active site.

Belongs to the GPI family.

Its subcellular location is the cytoplasm. It catalyses the reaction alpha-D-glucose 6-phosphate = beta-D-fructose 6-phosphate. The protein operates within carbohydrate biosynthesis; gluconeogenesis. It functions in the pathway carbohydrate degradation; glycolysis; D-glyceraldehyde 3-phosphate and glycerone phosphate from D-glucose: step 2/4. Its function is as follows. Catalyzes the reversible isomerization of glucose-6-phosphate to fructose-6-phosphate. In Deinococcus deserti (strain DSM 17065 / CIP 109153 / LMG 22923 / VCD115), this protein is Glucose-6-phosphate isomerase.